Here is a 511-residue protein sequence, read N- to C-terminus: PRLFALHHSATQYFSAAALPSPIPNPDIPDNQLFISNKWHDAVSKKTFPTVSPATGEVIGHVAEGDWADVDLAAKAARAAFRLGSPWRWMDALKRGWLLNHLADLVERDCVYLASLESLDNGKPFQESYVLDLDEVIKVYRYFAGWADKWHGKTIPMDGEHFCFTRHEPVGVCCQIIPWNFPLVMQSWKLALALAMGNTVVTKVAEQTPFSALYLASLIKEVGLPPGLVNIVTGYGPTAGAAIAHHMDIGKVAFTGSTKVGHLIQKAAGNSSLKRVTLELGGKSLSIVLADADMDHAVEQRQEALFFNMGQCCCPGSWTFIEESIYDEFLERTVEKAKQRRVGNPFDLDTQQGPQVDRERFERILGYIQLGQKEGAKLLCGGEHFRQQCFFIKPTVFGGVQDDMRIAREEIFGPVQPLFKFKKIEEVIERADNTRYGLAAAVFTQDLDKAMYFTQALQTGTVWVNTYNVVTCHTPLGGFKEPGNGRELGEDGLKAYTEVKTVTIKVPQKNS.

Residues 1–11 (PRLFALHHSAT) constitute a mitochondrion transit peptide. Residue lysine 45 is modified to N6-acetyllysine. An N6-acetyllysine; alternate modification is found at lysine 46. Position 46 is an N6-succinyllysine; alternate (lysine 46). At lysine 75 the chain carries N6-succinyllysine. 256–261 (GSTKVG) contacts NAD(+). The Proton acceptor role is filled by glutamate 279. The active-site Nucleophile is cysteine 313. N6-acetyllysine; alternate is present on residues lysine 377, lysine 393, and lysine 420. An N6-succinyllysine; alternate mark is found at lysine 377, lysine 393, and lysine 420. An N6-acetyllysine modification is found at lysine 423.

It belongs to the aldehyde dehydrogenase family. Homotetramer.

The protein localises to the mitochondrion matrix. The catalysed reaction is an aldehyde + NAD(+) + H2O = a carboxylate + NADH + 2 H(+). The protein operates within alcohol metabolism; ethanol degradation; acetate from ethanol: step 2/2. Its function is as follows. ALDHs play a major role in the detoxification of alcohol-derived acetaldehyde. They are involved in the metabolism of corticosteroids, biogenic amines, neurotransmitters, and lipid peroxidation. In the cornea, this enzyme may help in the absorption of the damaging UV-B, as well as in the detoxification of the UV-induced peroxidic aldehydes. The polypeptide is Aldehyde dehydrogenase X, mitochondrial (ALDH1B1) (Bos taurus (Bovine)).